The chain runs to 1101 residues: Cytospin-A (1101 aa).

Disordered regions lie at residues 1-170 (MRKA…NQIS) and 280-366 (SDCG…SGNA). Composition is skewed to polar residues over residues 29 to 48 (ESSA…LSKA) and 64 to 86 (ASNS…TAMS). Over residues 93–110 (RSSAGSSSNTKRSGSSGA) the composition is skewed to low complexity. Basic and acidic residues-rich tracts occupy residues 114–125 (GSSRERLRERSR) and 151–165 (GRTD…KSKS). The stretch at 162–254 (KSKSDNQISD…LKDRLNALGF (93 aa)) forms a coiled coil. Over residues 333-355 (LTSSDDALDAPSSSSESEGLPST) the composition is skewed to low complexity. Coiled-coil stretches lie at residues 373–427 (CLTE…MDSL) and 492–785 (QHLS…RGRV). The interval 923 to 978 (SISVSRRSSEELKRDISVPDGSSAPSLMVMTSPSPQLSLSSSSPTASVTPTARSRI) is disordered. The segment covering 929–939 (RSSEELKRDIS) has biased composition (basic and acidic residues). Positions 953-975 (TSPSPQLSLSSSSPTASVTPTAR) are enriched in low complexity. One can recognise a Calponin-homology (CH) domain in the interval 995-1100 (GSKRNALLKW…YVTSIYKYFE (106 aa)).

It belongs to the cytospin-A family. In terms of assembly, may interact with both microtubules and actin cytoskeleton.

The protein localises to the cytoplasm. Its subcellular location is the cytoskeleton. It localises to the spindle. It is found in the cell junction. The protein resides in the gap junction. Its function is as follows. Involved in cytokinesis and spindle organization. May play a role in actin cytoskeleton organization and microtubule stabilization and hence required for proper cell adhesion and migration. The polypeptide is Cytospin-A (specc1l) (Xenopus tropicalis (Western clawed frog)).